Consider the following 469-residue polypeptide: DNA-binding transcriptional regulator NtrC (469 aa).

In terms of domain architecture, Response regulatory spans 5–119 (IVWVVDDDSS…EAVALVERAI (115 aa)). Position 54 is a 4-aspartylphosphate (D54). One can recognise a Sigma-54 factor interaction domain in the interval 140-369 (IIGEAPAMQD…LENTCRWLTV (230 aa)). ATP is bound by residues 168–175 (GESGTGKE) and 231–240 (ADGGTLFLDE). The H-T-H motif DNA-binding region spans 445-464 (KQEAARLLGWGRNTLTRKLK).

In terms of processing, phosphorylated and dephosphorylated by NtrB.

It localises to the cytoplasm. Its function is as follows. Member of the two-component regulatory system NtrB/NtrC, which controls expression of the nitrogen-regulated (ntr) genes in response to nitrogen limitation. Phosphorylated NtrC binds directly to DNA and stimulates the formation of open promoter-sigma54-RNA polymerase complexes. The sequence is that of DNA-binding transcriptional regulator NtrC (glnG) from Escherichia coli O157:H7.